A 295-amino-acid chain; its full sequence is 4-diphosphocytidyl-2-C-methyl-D-erythritol kinase (295 aa).

Lys-15 is an active-site residue. 102–112 is an ATP binding site; the sequence is PIASGVGGGSS. The active site involves Asp-144.

This sequence belongs to the GHMP kinase family. IspE subfamily.

The catalysed reaction is 4-CDP-2-C-methyl-D-erythritol + ATP = 4-CDP-2-C-methyl-D-erythritol 2-phosphate + ADP + H(+). The protein operates within isoprenoid biosynthesis; isopentenyl diphosphate biosynthesis via DXP pathway; isopentenyl diphosphate from 1-deoxy-D-xylulose 5-phosphate: step 3/6. Catalyzes the phosphorylation of the position 2 hydroxy group of 4-diphosphocytidyl-2C-methyl-D-erythritol. The polypeptide is 4-diphosphocytidyl-2-C-methyl-D-erythritol kinase (Mesorhizobium japonicum (strain LMG 29417 / CECT 9101 / MAFF 303099) (Mesorhizobium loti (strain MAFF 303099))).